A 769-amino-acid chain; its full sequence is Serine/threonine-protein kinase PLK4 (769 aa).

Residues 14–267 (YEVQHLLGKG…LEAVLCHPFM (254 aa)) form the Protein kinase domain. ATP-binding positions include 20 to 28 (LGKGGFATV) and Lys43. Catalysis depends on Asp138, which acts as the Proton acceptor. A Cryptic POLO box 1 (CPB1) domain is found at 381–498 (EDRISVPPLN…ARFVGLVKSK (118 aa)). Residues 499-602 (TPKVTYFSTL…GRRPITDVQP (104 aa)) enclose the Cryptic POLO box 2 (CPB2) domain. A POLO box domain is found at 660-739 (PIKRINVPDI…IPNIQLKLKT (80 aa)).

This sequence belongs to the protein kinase superfamily. Ser/Thr protein kinase family. CDC5/Polo subfamily. In terms of assembly, homodimer. In terms of processing, ubiquitinated by the SCF(Slimb) ubiquitin ligase complex; leading to its degradation by the proteasome during interphase and regulating centriole number and ensuring the block to centriole reduplication.

Its subcellular location is the cytoplasm. The protein resides in the cytoskeleton. The protein localises to the microtubule organizing center. It localises to the centrosome. It is found in the centriole. It carries out the reaction L-seryl-[protein] + ATP = O-phospho-L-seryl-[protein] + ADP + H(+). The catalysed reaction is L-threonyl-[protein] + ATP = O-phospho-L-threonyl-[protein] + ADP + H(+). Its function is as follows. Serine/threonine-protein kinase that plays a central role in centriole duplication. Able to trigger procentriole formation on the surface of the mother centriole cylinder, using mother centriole as a platform, leading to the recruitment of centriole biogenesis proteins such as sas-6. When overexpressed, it is able to induce centrosome amplification through the simultaneous generation of multiple procentrioles adjoining each parental centriole during S phase. Centrosome amplification following overexpression can initiate tumorigenesis, highlighting the importance of centrosome regulation in cancers. The sequence is that of Serine/threonine-protein kinase PLK4 (SAK) from Drosophila sechellia (Fruit fly).